The primary structure comprises 248 residues: 2,3-bisphosphoglycerate-dependent phosphoglycerate mutase (248 aa).

Residues 8–15 (RHGESEWN), 21–22 (TG), R60, 87–90 (ERHY), K98, 114–115 (RR), and 183–184 (GN) each bind substrate. H9 (tele-phosphohistidine intermediate) is an active-site residue. E87 functions as the Proton donor/acceptor in the catalytic mechanism.

It belongs to the phosphoglycerate mutase family. BPG-dependent PGAM subfamily.

It carries out the reaction (2R)-2-phosphoglycerate = (2R)-3-phosphoglycerate. Its pathway is carbohydrate degradation; glycolysis; pyruvate from D-glyceraldehyde 3-phosphate: step 3/5. Functionally, catalyzes the interconversion of 2-phosphoglycerate and 3-phosphoglycerate. The protein is 2,3-bisphosphoglycerate-dependent phosphoglycerate mutase of Borrelia turicatae (strain 91E135).